We begin with the raw amino-acid sequence, 622 residues long: Apical membrane antigen 1 (622 aa).

An N-terminal signal peptide occupies residues Met-1–Gly-24. The Extracellular segment spans residues Gln-25–Lys-546. 5 cysteine pairs are disulfide-bonded: Cys-149-Cys-302, Cys-217-Cys-247, Cys-263-Cys-275, Cys-320-Cys-418, and Cys-337-Cys-409. N-linked (GlcNAc...) asparagine glycosylation occurs at Asn-162. N-linked (GlcNAc...) asparagine glycans are attached at residues Asn-286, Asn-371, Asn-421, Asn-422, and Asn-499. Cystine bridges form between Cys-443–Cys-502, Cys-490–Cys-507, and Cys-492–Cys-509. A helical transmembrane segment spans residues Ile-547–Tyr-567. At Lys-568–Tyr-622 the chain is on the cytoplasmic side. The disordered stretch occupies residues Asp-577–Lys-607.

The protein belongs to the apicomplexan parasites AMA1 family.

The protein localises to the membrane. Involved in parasite invasion of erythrocytes. This is Apical membrane antigen 1 (AMA-1) from Plasmodium falciparum (isolate 7G8).